Here is a 428-residue protein sequence, read N- to C-terminus: Serine--tRNA ligase (428 aa).

231 to 233 contacts L-serine; sequence TAE. ATP-binding positions include 262–264 and Val-278; that span reads RRE. Glu-285 contacts L-serine. 349–352 lines the ATP pocket; that stretch reads EVSS. An L-serine-binding site is contributed by Ser-384.

Belongs to the class-II aminoacyl-tRNA synthetase family. Type-1 seryl-tRNA synthetase subfamily. In terms of assembly, homodimer. The tRNA molecule binds across the dimer.

The protein resides in the cytoplasm. The catalysed reaction is tRNA(Ser) + L-serine + ATP = L-seryl-tRNA(Ser) + AMP + diphosphate + H(+). It carries out the reaction tRNA(Sec) + L-serine + ATP = L-seryl-tRNA(Sec) + AMP + diphosphate + H(+). It participates in aminoacyl-tRNA biosynthesis; selenocysteinyl-tRNA(Sec) biosynthesis; L-seryl-tRNA(Sec) from L-serine and tRNA(Sec): step 1/1. Functionally, catalyzes the attachment of serine to tRNA(Ser). Is also able to aminoacylate tRNA(Sec) with serine, to form the misacylated tRNA L-seryl-tRNA(Sec), which will be further converted into selenocysteinyl-tRNA(Sec). The polypeptide is Serine--tRNA ligase (Chlamydia trachomatis serovar L2 (strain ATCC VR-902B / DSM 19102 / 434/Bu)).